A 114-amino-acid polypeptide reads, in one-letter code: Probable 4-amino-4-deoxy-L-arabinose-phosphoundecaprenol flippase subunit ArnE (114 aa).

3 consecutive transmembrane segments (helical) span residues 41–61, 64–84, and 94–114; these read PWLI…IYLL, LPLS…LIGS, and YHNW…GGLL. The region spanning 53–112 is the EamA domain; the sequence is GMLLWIYLLQRLPLSMAYPMLSINLVLVLIGSRLFFHEQISYHNWLGAGAIIIGALLLGG.

This sequence belongs to the ArnE family. Heterodimer of ArnE and ArnF.

It is found in the cell inner membrane. It functions in the pathway bacterial outer membrane biogenesis; lipopolysaccharide biosynthesis. In terms of biological role, translocates 4-amino-4-deoxy-L-arabinose-phosphoundecaprenol (alpha-L-Ara4N-phosphoundecaprenol) from the cytoplasmic to the periplasmic side of the inner membrane. This Aeromonas salmonicida (strain A449) protein is Probable 4-amino-4-deoxy-L-arabinose-phosphoundecaprenol flippase subunit ArnE.